The chain runs to 468 residues: Ribulose bisphosphate carboxylase large chain (468 aa).

Residue K5 is modified to N6,N6,N6-trimethyllysine. The substrate site is built by N114 and T164. K166 acts as the Proton acceptor in catalysis. Residue K168 coordinates substrate. Mg(2+) is bound by residues K192, D194, and E195. N6-carboxylysine is present on K192. Catalysis depends on H285, which acts as the Proton acceptor. R286, H318, and S370 together coordinate substrate.

It belongs to the RuBisCO large chain family. Type I subfamily. Heterohexadecamer of 8 large chains and 8 small chains; disulfide-linked. The disulfide link is formed within the large subunit homodimers. Mg(2+) serves as cofactor. The disulfide bond which can form in the large chain dimeric partners within the hexadecamer appears to be associated with oxidative stress and protein turnover.

It localises to the plastid. Its subcellular location is the chloroplast. It carries out the reaction 2 (2R)-3-phosphoglycerate + 2 H(+) = D-ribulose 1,5-bisphosphate + CO2 + H2O. The catalysed reaction is D-ribulose 1,5-bisphosphate + O2 = 2-phosphoglycolate + (2R)-3-phosphoglycerate + 2 H(+). RuBisCO catalyzes two reactions: the carboxylation of D-ribulose 1,5-bisphosphate, the primary event in carbon dioxide fixation, as well as the oxidative fragmentation of the pentose substrate in the photorespiration process. Both reactions occur simultaneously and in competition at the same active site. This Anthocercis viscosa (Sticky tailflower) protein is Ribulose bisphosphate carboxylase large chain.